The following is a 549-amino-acid chain: Arginine--tRNA ligase (549 aa).

Positions 113–123 match the 'HIGH' region motif; sequence ANPDGPLHIGH.

Belongs to the class-I aminoacyl-tRNA synthetase family.

It is found in the cytoplasm. The catalysed reaction is tRNA(Arg) + L-arginine + ATP = L-arginyl-tRNA(Arg) + AMP + diphosphate. The chain is Arginine--tRNA ligase (argS) from Archaeoglobus fulgidus (strain ATCC 49558 / DSM 4304 / JCM 9628 / NBRC 100126 / VC-16).